The following is a 197-amino-acid chain: Imidazoleglycerol-phosphate dehydratase (197 aa).

This sequence belongs to the imidazoleglycerol-phosphate dehydratase family.

The protein localises to the cytoplasm. The catalysed reaction is D-erythro-1-(imidazol-4-yl)glycerol 3-phosphate = 3-(imidazol-4-yl)-2-oxopropyl phosphate + H2O. Its pathway is amino-acid biosynthesis; L-histidine biosynthesis; L-histidine from 5-phospho-alpha-D-ribose 1-diphosphate: step 6/9. In Thermobifida fusca (strain YX), this protein is Imidazoleglycerol-phosphate dehydratase.